Reading from the N-terminus, the 318-residue chain is Lysophospholipase D GDPD3 (318 aa).

The Cytoplasmic segment spans residues 1–2; the sequence is MS. Residues 3-23 form a helical membrane-spanning segment; sequence LLLYYALPALGSYAMLSIFFL. Residues 24-198 are Extracellular-facing; that stretch reads RRPHLLHTPR…KAANPEMPLS (175 aa). Positions 39–308 constitute a GP-PDE domain; sequence IRLGAHRGGS…DYPTALRHYL (270 aa). 3 residues coordinate a divalent metal cation: Glu71, Asp73, and His86. Residues 199–221 traverse the membrane as a helical segment; that stretch reads FTISRGFWVLLSYYLGLLPFIPI. Residues 222 to 318 are Cytoplasmic-facing; sequence PEKFFFCFLP…DNHGPAARTS (97 aa).

This sequence belongs to the glycerophosphoryl diester phosphodiesterase family. As to expression, widely expressed, with high level in kidney and ovary.

The protein resides in the membrane. It is found in the cytoplasm. The protein localises to the perinuclear region. It localises to the endoplasmic reticulum. It carries out the reaction 1-hexadecanoyl-sn-glycero-3-phosphocholine + H2O = 1-hexadecanoyl-sn-glycero-3-phosphate + choline + H(+). The enzyme catalyses 1-hexadecanoyl-sn-glycero-3-phosphocholine + H2O = sn-glycerol 3-phosphocholine + hexadecanoate + H(+). It catalyses the reaction 1-O-(1Z-octadecenyl)-sn-glycero-3-phospho-N-hexadecanoyl-ethanolamine + H2O = 1-O-(1Z-octadecenyl)-sn-glycero-3-phosphate + N-hexadecanoylethanolamine + H(+). The catalysed reaction is N-(5Z,8Z,11Z,14Z-eicosatetraenoyl)-1-(9Z-octadecenoyl)-sn-glycero-3-phosphoethanolamine + H2O = N-(5Z,8Z,11Z,14Z-eicosatetraenoyl)-ethanolamine + 1-(9Z-octadecenoyl)-sn-glycero-3-phosphate + H(+). It carries out the reaction N,1-di-(9Z-octadecenoyl)-sn-glycero-3-phosphoethanolamine + H2O = N-(9Z-octadecenoyl) ethanolamine + 1-(9Z-octadecenoyl)-sn-glycero-3-phosphate + H(+). The enzyme catalyses N-hexadecanoyl-1-(9Z-octadecenoyl)-sn-glycero-3-phosphoethanolamine + H2O = N-hexadecanoylethanolamine + 1-(9Z-octadecenoyl)-sn-glycero-3-phosphate + H(+). It catalyses the reaction 1-O-hexadecyl-sn-glycero-3-phosphocholine + H2O = 1-O-hexadecyl-sn-glycero-3-phosphate + choline + H(+). Lysophospholipase D activity is stimulated by calcium. Loss of lysophospholipase D activity in presence of EDTA. Hydrolyzes lysoglycerophospholipids to produce lysophosphatidic acid (LPA) and the corresponding amines. Shows a preference for 1-O-alkyl-sn-glycero-3-phosphocholine (lyso-PAF), lysophosphatidylcholine (lyso-PC) and N-acylethanolamine lysophospholipids. Does not display glycerophosphodiester phosphodiesterase activity, since it cannot hydrolyze either glycerophosphoinositol or glycerophosphocholine. This chain is Lysophospholipase D GDPD3, found in Homo sapiens (Human).